We begin with the raw amino-acid sequence, 174 residues long: 2-oxo-4-hydroxy-4-carboxy-5-ureidoimidazoline decarboxylase (174 aa).

Catalysis depends on His-67, which acts as the Proton donor. Residues Pro-68, 84–88 (SQEEQ), and 119–123 (FVICA) each bind substrate. The Microbody targeting signal motif lies at 172–174 (TKL).

The protein belongs to the OHCU decarboxylase family. As to quaternary structure, homodimer.

The protein localises to the peroxisome. It catalyses the reaction 5-hydroxy-2-oxo-4-ureido-2,5-dihydro-1H-imidazole-5-carboxylate + H(+) = (S)-allantoin + CO2. It participates in purine metabolism; urate degradation; (S)-allantoin from urate: step 3/3. Its function is as follows. Catalyzes the stereoselective decarboxylation of 2-oxo-4-hydroxy-4-carboxy-5-ureidoimidazoline (OHCU) to (S)-allantoin. The protein is 2-oxo-4-hydroxy-4-carboxy-5-ureidoimidazoline decarboxylase (urad) of Danio rerio (Zebrafish).